We begin with the raw amino-acid sequence, 157 residues long: Mediator of RNA polymerase II transcription subunit 10 (157 aa).

The protein belongs to the Mediator complex subunit 10 family. As to quaternary structure, component of the Mediator complex, which is composed of at least 21 subunits that form three structurally distinct submodules. The Mediator head module contains MED6, MED8, MED11, SRB4/MED17, SRB5/MED18, ROX3/MED19, SRB2/MED20 and SRB6/MED22, the middle module contains MED1, MED4, NUT1/MED5, MED7, CSE2/MED9, NUT2/MED10, SRB7/MED21 and SOH1/MED31, and the tail module contains MED2, PGD1/MED3, RGR1/MED14, GAL11/MED15 and SIN4/MED16. The head and the middle modules interact directly with RNA polymerase II, whereas the elongated tail module interacts with gene-specific regulatory proteins. NUT2/MED10 interacts directly with SRB7/MED21.

It localises to the nucleus. In terms of biological role, component of the Mediator complex, a coactivator involved in the regulated transcription of nearly all RNA polymerase II-dependent genes. Mediator functions as a bridge to convey information from gene-specific regulatory proteins to the basal RNA polymerase II transcription machinery. The Mediator complex, having a compact conformation in its free form, is recruited to promoters by direct interactions with regulatory proteins and serves for the assembly of a functional preinitiation complex with RNA polymerase II and the general transcription factors. The Mediator complex unfolds to an extended conformation and partially surrounds RNA polymerase II, specifically interacting with the unphosphorylated form of the C-terminal domain (CTD) of RNA polymerase II. The Mediator complex dissociates from the RNA polymerase II holoenzyme and stays at the promoter when transcriptional elongation begins. In Saccharomyces cerevisiae (strain ATCC 204508 / S288c) (Baker's yeast), this protein is Mediator of RNA polymerase II transcription subunit 10 (NUT2).